We begin with the raw amino-acid sequence, 105 residues long: Large ribosomal subunit protein bL21 (105 aa).

This sequence belongs to the bacterial ribosomal protein bL21 family. As to quaternary structure, part of the 50S ribosomal subunit. Contacts protein L20.

In terms of biological role, this protein binds to 23S rRNA in the presence of protein L20. In Rickettsia typhi (strain ATCC VR-144 / Wilmington), this protein is Large ribosomal subunit protein bL21.